A 740-amino-acid chain; its full sequence is Dynein regulatory complex protein 1 (740 aa).

The segment at 56–75 (GEYLDGKKESEEDQSKSYKQ) is disordered. Residues 101–387 (IDIREIHRRV…LQFKELQKAM (287 aa)) adopt a coiled-coil conformation. Positions 573 to 620 (EKASMEETSMGSELELAEQTEMEGAKEESLVEGEKEEEEETPPSPWDI) are disordered. Over residues 595–605 (EGAKEESLVEG) the composition is skewed to basic and acidic residues. Residues 691–724 (LTQRAKLLLENSSLEQRNTELQALLQQYLNSKIN) are a coiled coil.

This sequence belongs to the DRC1 family. As to quaternary structure, component of the nexin-dynein regulatory complex (N-DRC). Interacts with CCDC65/DRC2, DRC3, GAS8/DRC4 and TCTE1/DRC5.

It localises to the cytoplasm. Its subcellular location is the cytoskeleton. It is found in the cilium axoneme. The protein localises to the flagellum axoneme. Component of the nexin-dynein regulatory complex (N-DRC) a key regulator of ciliary/flagellar motility which maintains the alignment and integrity of the distal axoneme and regulates microtubule sliding in motile axonemes. Plays a critical role in the assembly of N-DRC and also stabilizes the assembly of multiple inner dynein arms and radial spokes. Coassembles with CCDC65/DRC2 to form a central scaffold needed for assembly of the N-DRC and its attachment to the outer doublet microtubules. The sequence is that of Dynein regulatory complex protein 1 (DRC1) from Macaca fascicularis (Crab-eating macaque).